The chain runs to 1063 residues: MASTTPITMEDLQKALEAQSRALRAELAAGASQSRRPRPPRQRDSSTSGDDSGRDSGGPRRRRGNRGRGQLRDWSRAPPPPEERQESRSQTPAPKPSRAPPQQPQPPRMQTGRGGSAPRPELGPPTNPFQAAVARGLRPPLHDPDTEAPTEACVTSWLWSEGEGAVFYRVDLHFTNLGTPPLDEDGRWDPALMYNPCGPEPPAHVVRAYNQPAGDVRGVWGKGERTYAEQDFRVGGTRWHRLLRMPVRGLDGDSAPLPPHTTERIETRSARHPWRIRFGAPQAFLAGLLLAAVAVGTARAGLQPRADMAAPPTLPQPPRAHGQHYGHHHHQLPFLGHDGHHGGTLRVGQHHRNASDVLPGHWLQGGWGCYNLSDWHQGTHVCHTKHMDFWCVEHDRPPPATPTPFTTAANSTTAATPATAPAPCHAGLNDSCGGFLSGCGPMRLRHGADTRCGRLICGLSTTAQYPPTRFGCAMRWGLPPWELVVLTARPEDGWTCRGVPAHPGTRCPELVSPMGRATCSPASALWLATANALSLDHALAAFVLLVPWVLIFMVCRRACRRRGAAAALTAVVLQGYNPPAYGEEAFTYLCTAPGCATQTPVPVRLAGVRFESKIVDGGCFAPWDLEATGACICEIPTDVSCEGLGAWVPTAPCARIWNGTQRACTFWAVNAYSSGGYAQLASYFNPGGSYYKQYHPTACEVEPAFGHSDAACWGFPTDTVMSVFALASYVQHPHKTVRVKFHTETRTVWQLSVAGASCNVTTEHPFCNTPHGQLEVQVPPDPGDLVEYIMNYTGNQQSRWGLGSPNCHGPDWASPVCQRHSPDCSRLVGATPERPRLRLVDADDPLLRTAPGPGEVWVTPVIGSQARKCGLHIRAGPYGHATVEMPEWIHAHTTSDPWHPPGPLGLKFKTVRPVALPRALAPPRNVRVTGCYQCGTPALVEGLAPGGGNCHLTVNGEDVGAFPPGKFVTAALLNTPPPYQVSCGGESDRASARVIDPAAQSFTGVVYGTHTTAVSETRQTWAEWAAAHWWQLTLGAICALLLAGLLACCAKCLYYLRGAIAPR.

Residues Met1 to Ala131 form a disordered region. The tract at residues Gly30–Gly69 is human C1QBP/SF2P32-binding. Ser46 bears the Phosphoserine; by host mark. The span at Gln70–Ser87 shows a compositional bias: basic and acidic residues. The span at Ala93–Pro107 shows a compositional bias: pro residues. The cysteines at positions 153 and 197 are disulfide-linked. A functions as E2 signal peptide region spans residues Gly279 to Ala300. Topologically, residues Gly301 to Ser534 are extracellular. 4 N-linked (GlcNAc...) asparagine; by host glycosylation sites follow: Asn353, Asn371, Asn410, and Asn429. Residues Leu535–Cys555 traverse the membrane as a helical segment. The Cytoplasmic portion of the chain corresponds to Arg556 to Gly582. Residues Gly563–Gly582 are functions as E1 signal peptide. The Extracellular portion of the chain corresponds to Glu583–His1028. 8 disulfides stabilise this stretch: Cys590–Cys595, Cys619–Cys824, Cys641–Cys653, Cys699–Cys712, Cys758–Cys767, Cys807–Cys817, Cys931–Cys934, and Cys950–Cys983. Asn658 carries an N-linked (GlcNAc...) asparagine; by host glycan. Asn670 and Ala671 together coordinate Ca(2+). The Ca(2+) site is built by Asp718 and Thr719. Asn759 and Asn791 each carry an N-linked (GlcNAc...) asparagine; by host glycan. Residues Thr1011 and Thr1012 are each glycosylated (O-linked (GalNAc...) threonine; by host). A helical membrane pass occupies residues Trp1029–Cys1049. At Ala1050–Arg1063 the chain is on the extracellular side.

Homodimer; further assembles into homooligomer. Interacts with human C1QBP. Interacts (via N-terminus) with protease/methyltransferase p150. In terms of assembly, heterodimer with spike glycoprotein E2. As to quaternary structure, heterodimer with spike glycoprotein E1. Structural polyprotein: Specific enzymatic cleavages in vivo yield mature proteins. Two signal peptidase-mediated cleavages within the polyprotein produce the structural proteins capsid, E2, and E1. The E2 signal peptide remains attached to the C-terminus of the capsid protein after cleavage by the signal peptidase. Another signal peptide at E2 C-terminus directs E1 to the ER, with a similar mechanism. Post-translationally, contains three N-linked oligosaccharides. In terms of processing, capsid is phosphorylated on Ser-46 by host. This phosphorylation negatively regulates capsid protein RNA-binding activity. Dephosphorylated by human PP1A.

The protein localises to the virion. The protein resides in the host cytoplasm. It is found in the host mitochondrion. It localises to the virion membrane. Its subcellular location is the host Golgi apparatus membrane. Functionally, capsid protein interacts with genomic RNA and assembles into icosahedric core particles 65-70 nm in diameter. The resulting nucleocapsid eventually associates with the cytoplasmic domain of E2 at the cell membrane, leading to budding and formation of mature virions from host Golgi membranes. Phosphorylation negatively regulates RNA-binding activity, possibly delaying virion assembly during the viral replication phase. Capsid protein dimerizes and becomes disulfide-linked in the virion. Modulates genomic RNA replication. Modulates subgenomic RNA synthesis by interacting with human C1QBP/SF2P32. Induces both perinuclear clustering of mitochondria and the formation of electron-dense intermitochondrial plaques, both hallmarks of rubella virus infected cells. Induces apoptosis when expressed in transfected cells. Its function is as follows. Responsible for viral attachment to target host cell, by binding to the cell receptor. Its transport to the plasma membrane depends on interaction with E1 protein. The surface glycoproteins display an irregular helical organization and a pseudo-tetrameric inner nucleocapsid arrangement. Class II viral fusion protein. Fusion activity is inactive as long as E1 is bound to E2 in mature virion. After virus attachment to target cell and clathrin-mediated endocytosis, acidification of the endosome would induce dissociation of E1/E2 heterodimer and concomitant trimerization of the E1 subunits. This E1 homotrimer is fusion active, and promotes release of viral nucleocapsid in cytoplasm after endosome and viral membrane fusion. The cytoplasmic tail of spike glycoprotein E1 modulates virus release. The surface glycoproteins display an irregular helical organization and a pseudo-tetrameric inner nucleocapsid arrangement. In Homo sapiens (Human), this protein is Structural polyprotein.